Consider the following 692-residue polypeptide: Transforming growth factor beta activator LRRC33 (692 aa).

Positions 1-18 are cleaved as a signal peptide; sequence MELLPLWLCLGFHFLTVG. Topologically, residues 19 to 650 are extracellular; the sequence is WRNRSGTATA…CKWERLDLGL (632 aa). N-linked (GlcNAc...) asparagine glycosylation is present at asparagine 21. Residues 29–56 form the LRRNT domain; sequence ASQGVCKLVGGAADCRGQSLASVPSSLP. LRR repeat units lie at residues 58-79, 82-103, 106-127, 133-155, 158-179, 182-203, 206-227, 228-239, 251-272, and 273-294; these read HARM…SLQP, LLES…AFQE, HLRS…TAAA, GLRR…MLQN, SLRS…VFEG, RLRE…AFDG, ELRH…GLTR, LRVLNVSYNVLE, ELET…PQYS, and KLRT…YNTS. Asparagine 74 is a glycosylation site (N-linked (GlcNAc...) asparagine). A glycan (N-linked (GlcNAc...) asparagine) is linked at asparagine 155. A glycan (N-linked (GlcNAc...) asparagine) is linked at asparagine 232. Residues asparagine 292, asparagine 309, and asparagine 312 are each glycosylated (N-linked (GlcNAc...) asparagine). LRR repeat units follow at residues 329–350, 353–374, 377–398, 403–424, 427–447, 463–484, 486–507, 512–534, 537–558, 559–580, and 585–594; these read DLRF…FLRK, SLSH…EHEP, ALTE…PGLA, SLRL…LFAN, NITT…PAAS, SLRS…PFQG, SLTY…APLQ, MLQV…DFSG, NLRD…GGSL, ALET…AVSE, and GLRTIYLSQN. N-linked (GlcNAc...) asparagine glycosylation is found at asparagine 408 and asparagine 427. Residue asparagine 500 is glycosylated (N-linked (GlcNAc...) asparagine). The LRRCT domain maps to 595 to 643; that stretch reads PYDCCGVDGWGALQHGQTVADWAMVTCNLSSKIIRVTELPGGVPRDCKW. Asparagine 622 is a glycosylation site (N-linked (GlcNAc...) asparagine). A helical transmembrane segment spans residues 651–671; it reads LYLVLILPSCLTLLVACTVIV. Over 672 to 692 the chain is Cytoplasmic; that stretch reads LTFKKPLLQVIKSRCHWSSVY.

It belongs to the LRRC32/LRRC33 family. As to quaternary structure, interacts with TGFB1; associates via disulfide bonds with the Latency-associated peptide chain (LAP) regulatory chain of TGFB1, leading to regulate activation of TGF-beta-1. Interacts (via LRR repeats) with TLR2, TLR3, TLR4, TLR9 and probably other Toll-like receptors. Interacts with CYBB/NOX2; the interaction is direct. As to expression, mainly expressed in cells of hematopoietic origin. Highly expressed in bone marrow, thymus, liver, lung, intestine and spleen. In the brain, highly expressed in microglia.

It localises to the cell membrane. Its subcellular location is the endoplasmic reticulum membrane. Key regulator of transforming growth factor beta-1 (TGFB1) specifically required for microglia function in the nervous system. Required for activation of latent TGF-beta-1 in macrophages and microglia: associates specifically via disulfide bonds with the Latency-associated peptide (LAP), which is the regulatory chain of TGFB1, and regulates integrin-dependent activation of TGF-beta-1. TGF-beta-1 activation mediated by LRRC33/NRROS is highly localized: there is little spreading of TGF-beta-1 activated from one microglial cell to neighboring microglia, suggesting the existence of localized and selective activation of TGF-beta-1 by LRRC33/NRROS. Indirectly plays a role in Toll-like receptor (TLR) signaling: ability to inhibit TLR-mediated NF-kappa-B activation and cytokine production is probably a consequence of its role in TGF-beta-1 signaling. This is Transforming growth factor beta activator LRRC33 from Homo sapiens (Human).